The primary structure comprises 485 residues: Phosphoglucosamine mutase (485 aa).

The Phosphoserine intermediate role is filled by Ser133. 4 residues coordinate Mg(2+): Ser133, Asp274, Asp276, and Asp278. A Phosphoserine modification is found at Ser133.

The protein belongs to the phosphohexose mutase family. Mg(2+) serves as cofactor. Post-translationally, activated by phosphorylation.

It catalyses the reaction alpha-D-glucosamine 1-phosphate = D-glucosamine 6-phosphate. Functionally, catalyzes the conversion of glucosamine-6-phosphate to glucosamine-1-phosphate. This chain is Phosphoglucosamine mutase, found in Crocosphaera subtropica (strain ATCC 51142 / BH68) (Cyanothece sp. (strain ATCC 51142)).